Reading from the N-terminus, the 345-residue chain is tRNA pseudouridine synthase B (345 aa).

The Nucleophile role is filled by aspartate 39.

This sequence belongs to the pseudouridine synthase TruB family. Type 1 subfamily.

It carries out the reaction uridine(55) in tRNA = pseudouridine(55) in tRNA. Its function is as follows. Responsible for synthesis of pseudouridine from uracil-55 in the psi GC loop of transfer RNAs. The chain is tRNA pseudouridine synthase B from Rickettsia peacockii (strain Rustic).